A 734-amino-acid chain; its full sequence is Photosystem I P700 chlorophyll a apoprotein A2 (734 aa).

8 helical membrane-spanning segments follow: residues 46 to 69 (IFAS…FHVA), 135 to 158 (LYSG…LHLQ), 175 to 199 (LNHH…HVAI), 273 to 291 (MAHH…GHMY), 330 to 353 (LHFQ…QHMY), 369 to 395 (AALY…IFFI), 417 to 439 (AIIS…LYVH), and 517 to 535 (FLVH…LILV). Cys-559 and Cys-568 together coordinate [4Fe-4S] cluster. 2 helical membrane passes run 575-596 (AFYL…YWHW) and 643-665 (LSVW…MFLI). Chlorophyll a contacts are provided by His-654, Met-662, and Tyr-670. Phylloquinone is bound at residue Trp-671. Residues 707–727 (LVGLAHFSVGYIFTYAAFLIA) traverse the membrane as a helical segment.

Belongs to the PsaA/PsaB family. As to quaternary structure, the PsaA/B heterodimer binds the P700 chlorophyll special pair and subsequent electron acceptors. PSI consists of a core antenna complex that captures photons, and an electron transfer chain that converts photonic excitation into a charge separation. The eukaryotic PSI reaction center is composed of at least 11 subunits. Requires P700 is a chlorophyll a/chlorophyll a' dimer, A0 is one or more chlorophyll a, A1 is one or both phylloquinones and FX is a shared 4Fe-4S iron-sulfur center. as cofactor.

The protein resides in the plastid. It localises to the chloroplast thylakoid membrane. It carries out the reaction reduced [plastocyanin] + hnu + oxidized [2Fe-2S]-[ferredoxin] = oxidized [plastocyanin] + reduced [2Fe-2S]-[ferredoxin]. In terms of biological role, psaA and PsaB bind P700, the primary electron donor of photosystem I (PSI), as well as the electron acceptors A0, A1 and FX. PSI is a plastocyanin-ferredoxin oxidoreductase, converting photonic excitation into a charge separation, which transfers an electron from the donor P700 chlorophyll pair to the spectroscopically characterized acceptors A0, A1, FX, FA and FB in turn. Oxidized P700 is reduced on the lumenal side of the thylakoid membrane by plastocyanin. The chain is Photosystem I P700 chlorophyll a apoprotein A2 from Antirrhinum majus (Garden snapdragon).